The sequence spans 264 residues: 2-C-methyl-D-erythritol 4-phosphate cytidylyltransferase (264 aa).

The disordered stretch occupies residues 234-264 (ARDPESAHPQSSVLASAFSGPGSRVSGPEEI).

It belongs to the IspD/TarI cytidylyltransferase family. IspD subfamily.

The catalysed reaction is 2-C-methyl-D-erythritol 4-phosphate + CTP + H(+) = 4-CDP-2-C-methyl-D-erythritol + diphosphate. It participates in isoprenoid biosynthesis; isopentenyl diphosphate biosynthesis via DXP pathway; isopentenyl diphosphate from 1-deoxy-D-xylulose 5-phosphate: step 2/6. Catalyzes the formation of 4-diphosphocytidyl-2-C-methyl-D-erythritol from CTP and 2-C-methyl-D-erythritol 4-phosphate (MEP). This Xanthomonas euvesicatoria pv. vesicatoria (strain 85-10) (Xanthomonas campestris pv. vesicatoria) protein is 2-C-methyl-D-erythritol 4-phosphate cytidylyltransferase.